The following is a 586-amino-acid chain: FAD-linked oxidoreductase orf1 (586 aa).

The signal sequence occupies residues 1-17 (MKSFATTVLLVTPGIYA). N-linked (GlcNAc...) asparagine glycosylation is found at asparagine 29, asparagine 51, asparagine 79, asparagine 110, asparagine 146, asparagine 188, asparagine 314, asparagine 321, asparagine 358, asparagine 402, asparagine 434, and asparagine 461. The region spanning 124–303 (TLGNYVSYAI…LSMTAKVHPD (180 aa)) is the FAD-binding PCMH-type domain.

The protein belongs to the oxygen-dependent FAD-linked oxidoreductase family.

It catalyses the reaction betaenone C = betaenone A. Its pathway is mycotoxin biosynthesis. FAD-linked oxidoreductase; part of the gene cluster that mediates the biosynthesis of betaenones, phytotoxic polyketides involved in leaf spot disease in sugar beets. The first step of the pathway is the synthesis of dehydroprobetaenone I by the polyketide synthase bet1 and the enoyl reductase bet3 via condensation of one acetyl-CoA starter unit with 7 malonyl-CoA units and 5 methylations. The C-terminal reductase (R) domain of bet1 catalyzes the reductive release of the polyketide chain. Because bet1 lacks a designated enoylreductase (ER) domain, the required activity is provided the enoyl reductase bet3. The short-chain dehydrogenase/reductase bet4 then catalyzes reduction of dehydroprobetaenone I to probetaenone I. The cytochrome P450 monooxygenase bet2 catalyzes successive epoxidation, oxidation (resulting from epoxide opening) and hydroxylation to install a tertiary alcohol in the decaline ring to yield betaenone C from dehydroprobetaenone I and betaenone B from probetaenone I. The FAD-linked oxidoreductase (orf1) is probably responsible for the conversion of betaenone C to betaenone A via an intramolecular aldol reaction between C-1 and C-17 to form the bridged tricyclic system in betaenone A. This Neocamarosporium betae (Beet black rot fungus) protein is FAD-linked oxidoreductase orf1.